Reading from the N-terminus, the 1372-residue chain is uncharacterized protein (1372 aa).

The tract at residues 1-67 (MEATDQEVML…PPAPSKNPMQ (67 aa)) is disordered. Polar residues predominate over residues 17 to 28 (MSTSATSSTNGG). The stretch at 75–143 (NLYQTAQEQL…LEEHDRLRRK (69 aa)) forms a coiled coil. 5 disordered regions span residues 178–199 (NDLSDLGIGTSSASGKSSLSGD), 238–287 (HINR…QASS), 380–414 (EVSNGGAPAAPKLVFRDGLTNGNSATTAPKSEVRR), 427–447 (QSLEQQRKAFSSSKSVDVPVP), and 486–531 (EERM…DSGI). 2 stretches are compositionally biased toward low complexity: residues 184-198 (GIGTSSASGKSSLSG) and 238-251 (HINRNGSNGNHGNG). Polar residues-rich tracts occupy residues 257 to 287 (TGPSNSSKSAGRQYISSPGYDTSSSNAQASS) and 399 to 408 (TNGNSATTAP). The stretch at 409–438 (KSEVRRLSGDISSIRDRMQSLEQQRKAFSS) forms a coiled coil. Over residues 486-499 (EERMRQQQQKEKHS) the composition is skewed to basic and acidic residues. Residues 514 to 523 (ALIIEEPPVA) are compositionally biased toward low complexity. Residues 539-580 (LQQQQQLNAAIAALALEERQLEEAANAVNQIEAEFDELTDLH) adopt a coiled-coil conformation. The span at 652-673 (VSKSGPTPNPTSTPNMVSSSPN) shows a compositional bias: low complexity. Disordered regions lie at residues 652–679 (VSKSGPTPNPTSTPNMVSSSPNCNLRRK), 799–820 (SRQLDKPPTPPAPPKKTVRSEH), 860–897 (SQSDSKSLTSPIMSPKPLPSGRIPQITPPASPKPPKRV), 1151–1181 (SSQMMKTSLPESVEKPSTPLPGRKSKIPIPK), and 1231–1250 (SPPSIPKTPEQTQLHASPTK). 2 stretches are compositionally biased toward polar residues: residues 860–871 (SQSDSKSLTSPI) and 1151–1160 (SSQMMKTSLP).

This is an uncharacterized protein from Drosophila melanogaster (Fruit fly).